We begin with the raw amino-acid sequence, 121 residues long: MAAVSVDPQRPLPVLLVSVSLGIYEDEHHRVWIAVNVETSHSSHGNRIETCVTVHLQHMTTLPQEPTPQQPINNNSLPTMWRLESRNTYTGTDGTYWRLLDHSQMGDTVQLTLDIIIGEDD.

Belongs to the TCL1 family.

This is Protein TCL1B5 (Tcl1b5) from Mus musculus (Mouse).